Here is a 464-residue protein sequence, read N- to C-terminus: Protein ABHD18 (464 aa).

A signal peptide spans 1–24 (MGVSKLDILYRRLLLTKLFIRGWG). Asn-341 carries an N-linked (GlcNAc...) asparagine glycan.

This sequence belongs to the AB hydrolase superfamily.

Its subcellular location is the secreted. The chain is Protein ABHD18 from Mus musculus (Mouse).